Reading from the N-terminus, the 250-residue chain is Small ribosomal subunit protein uS3 (250 aa).

Positions 39–111 (IRQLINNFSK…DINLNILEVK (73 aa)) constitute a KH type-2 domain.

The protein belongs to the universal ribosomal protein uS3 family. Part of the 30S ribosomal subunit. Forms a tight complex with proteins S10 and S14.

Its function is as follows. Binds the lower part of the 30S subunit head. Binds mRNA in the 70S ribosome, positioning it for translation. The chain is Small ribosomal subunit protein uS3 from Phytoplasma australiense.